We begin with the raw amino-acid sequence, 414 residues long: Esterase FrsA (414 aa).

It belongs to the FrsA family.

It carries out the reaction a carboxylic ester + H2O = an alcohol + a carboxylate + H(+). Functionally, catalyzes the hydrolysis of esters. The protein is Esterase FrsA of Escherichia coli O17:K52:H18 (strain UMN026 / ExPEC).